The chain runs to 127 residues: Cyclin-dependent kinase 2-associated protein 2 (127 aa).

Residues 1 to 47 (MSYKPIAPAPSSTPGSSTPGPGTPVPTAGSVPSPSGSVPGAAAPFRP) are disordered. The span at 9–44 (APSSTPGSSTPGPGTPVPTAGSVPSPSGSVPGAAAP) shows a compositional bias: low complexity. Residues 65-107 (PPGSQGSQSTYTDLLSVIEEMGKEIRPTYAGSKSAMERLKRGI) are interaction with CDK2.

It belongs to the CDK2AP family. As to quaternary structure, component of the nucleosome remodeling and deacetylase (NuRD) repressor complex, composed of core proteins MTA1, MTA2, MTA3, RBBP4, RBBP7, HDAC1, HDAC2, MBD2, MBD3, and peripherally associated proteins CDK2AP1, CDK2AP2, GATAD2A, GATAD2B, CHD3, CHD4 and CHD5. The exact stoichiometry of the NuRD complex is unknown, and some subunits such as MBD2 and MBD3, GATAD2A and GATAD2B, and CHD3, CHD4 and CHD5 define mutually exclusive NuRD complexes. Interacts with CDK2AP1. Interacts with CDK2. Interacts with MAPK1. Post-translationally, phosphorylated by MAPK1 and CDK2. Oocytes (at protein level).

It localises to the cytoplasm. It is found in the nucleus. Functionally, acts as a component of the histone deacetylase NuRD complex which participates in the remodeling of chromatin. Inhibits cell cycle G1/S phase transition by repressing CDK2 expression and activation; represses CDK2 activation by inhibiting its interaction with cyclin E and A. Plays a role in regulating the self-renewal of embryonic stem cells (ESCs) and in maintaining cell survival during terminal differentiation of ESCs. Regulates microtubule organization of metaphase II oocytes. The protein is Cyclin-dependent kinase 2-associated protein 2 (Cdk2ap2) of Mus musculus (Mouse).